The chain runs to 103 residues: Pyrimidine/purine nucleoside phosphorylase (103 aa).

Belongs to the nucleoside phosphorylase PpnP family.

It carries out the reaction a purine D-ribonucleoside + phosphate = a purine nucleobase + alpha-D-ribose 1-phosphate. The catalysed reaction is adenosine + phosphate = alpha-D-ribose 1-phosphate + adenine. It catalyses the reaction cytidine + phosphate = cytosine + alpha-D-ribose 1-phosphate. The enzyme catalyses guanosine + phosphate = alpha-D-ribose 1-phosphate + guanine. It carries out the reaction inosine + phosphate = alpha-D-ribose 1-phosphate + hypoxanthine. The catalysed reaction is thymidine + phosphate = 2-deoxy-alpha-D-ribose 1-phosphate + thymine. It catalyses the reaction uridine + phosphate = alpha-D-ribose 1-phosphate + uracil. The enzyme catalyses xanthosine + phosphate = alpha-D-ribose 1-phosphate + xanthine. In terms of biological role, catalyzes the phosphorolysis of diverse nucleosides, yielding D-ribose 1-phosphate and the respective free bases. Can use uridine, adenosine, guanosine, cytidine, thymidine, inosine and xanthosine as substrates. Also catalyzes the reverse reactions. This chain is Pyrimidine/purine nucleoside phosphorylase, found in Methylococcus capsulatus (strain ATCC 33009 / NCIMB 11132 / Bath).